The chain runs to 137 residues: Gonadotropin subunit beta-1 (137 aa).

A signal peptide spans 1–24 (MYCTHLRMLQLVVMATLWVTPVRA). 5 disulfides stabilise this stretch: Cys-32/Cys-78, Cys-46/Cys-93, Cys-55/Cys-108, Cys-59/Cys-110, and Cys-113/Cys-120. Asn-36 carries N-linked (GlcNAc...) asparagine glycosylation.

It belongs to the glycoprotein hormones subunit beta family. As to quaternary structure, heterodimer of an alpha and a beta chain.

The protein localises to the secreted. Its function is as follows. Involved in gametogenesis and steroidogenesis. In Coregonus autumnalis (Arctic cisco), this protein is Gonadotropin subunit beta-1 (cgba).